The chain runs to 67 residues: V-type proton ATPase subunit e (67 aa).

Residues 1 to 2 (MG) are Lumenal-facing. The helical transmembrane segment at 3–23 (GLVVLLVGLLTALMSVVSYYV) threads the bilayer. Residues 24–35 (SPKGNNTSTWQM) are Cytoplasmic-facing. A helical transmembrane segment spans residues 36–56 (SLILTFSCCYLLWAITYLAQL). The Lumenal segment spans residues 57–67 (HPLEAPSRVLE).

It belongs to the V-ATPase e1/e2 subunit family. V-ATPase is a heteromultimeric enzyme composed of a peripheral catalytic V1 complex (components A to H) attached to an integral membrane V0 proton pore complex (components: a, c, c', c'', d, e, f and VOA1).

The protein resides in the vacuole membrane. Functionally, subunit of the V0 complex of vacuolar(H+)-ATPase (V-ATPase), a multisubunit enzyme composed of a peripheral complex (V1) that hydrolyzes ATP and a membrane integral complex (V0) that translocates protons. V-ATPase is responsible for acidifying and maintaining the pH of intracellular compartments. The polypeptide is V-type proton ATPase subunit e (vma9) (Schizosaccharomyces pombe (strain 972 / ATCC 24843) (Fission yeast)).